The chain runs to 874 residues: MANLSGLSNRSRTTLASLRRFGFQTTQQAKPTESSKTPIDASVAENWSIRPELLSLFQETLQTELGAQVRIRPRPRILALSHGRNTNTVSADGFDFHFGVRAQVNPVAAPIRDLHDAFNPDGLLESLTAAFDTSPYPIRAVVLTYPGNPLGQCCSAEALRRCAKFCHDRELHLICDEVYALSYFGAADSEATPFQSIVSFDLNAMGCDLSRVHVVWSMSKDFGCSGLRLGCVISQANPELILGLRVPTSTEVSSLSTLCSTALLTSATLPDIIELNVKRLLLSYKAVIATLECHGVEYIPATAGLCVFARLAPEAKTPDDEIGFQHRLRDSGLLRASSISYNSMVKGSSDKIRPNNVRQKKMEPTLKILGASLQEALSQLTGPLNKERLAALHDHSEGRLVDANLGEAAAYTIDLLHQVEQLLEPSSLVLADHFLGYLNTKCLCAAVEFHIPDLLVEGPKSVSQLAQLSGARADRLGQVLRLLRNNGIFQYDTENATYSNNPTSSMLRSDHWTQWHNWVDLYGNEFYDMARGIPASLKQGTTRTPAQINFNTDQCMFDYFTAQGWLPRLHRTLGGGATAQAPGILADYPWEDFGDGPFLDIGGGEGALIALILRRHTRTKAALLDTPRVIEHARTLFLSPDGKLSRYGDLTMMVSADGQERTEAEWRTLAGRTGWEIRTIRKLRGAWPSDETSYINYIKPLILAHELEIPHVLSVIDTKDEWFYRIHPERMVPSLKDQDPETKAEVIVFESTACLQYLADRFDDGTWTGRNAAERGSVLSWTAYQTAALGLHENCLRQWDILEKRLARDGQEYIALKDRPTIADLSYFPFSMPWMFQFLGVDIKDWPSIERWSQRMLARPAVQAVMEMGPQIGH.

The interval 1 to 339 (MANLSGLSNR…DSGLLRASSI (339 aa)) is aminotransferase ataI. Residues 20–39 (RFGFQTTQQAKPTESSKTPI) form a disordered region. A compositionally biased stretch (polar residues) spans 23 to 37 (FQTTQQAKPTESSKT). Positions 340 to 668 (SYNSMVKGSS…QERTEAEWRT (329 aa)) are O-methyltransferase ataM. Residue Asp-625 participates in S-adenosyl-L-methionine binding. The interval 669–874 (LAGRTGWEIR…VMEMGPQIGH (206 aa)) is glutathione S-transferase ataG. Residues 699-766 (KPLILAHELE…YLADRFDDGT (68 aa)) enclose the GST N-terminal domain. Residues 739–874 (DPETKAEVIV…VMEMGPQIGH (136 aa)) form the GST C-terminal domain.

It in the N-terminal section; belongs to the class-I pyridoxal-phosphate-dependent aminotransferase family. In the 2nd section; belongs to the class I-like SAM-binding methyltransferase superfamily. Cation-independent O-methyltransferase family. The protein in the C-terminal section; belongs to the GST superfamily. Pyridoxal 5'-phosphate serves as cofactor.

It carries out the reaction RX + glutathione = an S-substituted glutathione + a halide anion + H(+). It participates in mycotoxin biosynthesis. Its function is as follows. Trimodular acetylaranotin synthesis protein; part of the gene cluster that mediates the biosynthesis of acetylaranotin, a member of the epipolythiodioxopiperazine (ETP) class of toxins characterized by a disulfide-bridged cyclic dipeptide. The first step of acetylaranotin biosynthesis is performed by the NRPS ataP which produces diketopiperazine cyclo-L-Phe-L-Phe via the condensation of 2 phenylalanines (L-Phe). The ataC domain of ataTC then catalyzes the formation of bishydroxylation of cyclo-L-Phe-L-Phe. The glutathione S-transferase domain ataG in ataIMG further catalyzes the conjugation of two glutathiones to the bishydroxylated intermediate. Next, the dipeptidase ataJ removes the Glu residues. The following step is performed by the carbon sulfur lyase domain ataI of ataIMG which may convert the bis-cysteinyl adduct to yield an epidithiol intermediate. The ataT domain from ataTC then catalyzes the oxidation of the free dithiols, followed by a cyclization step catalyzed by the cytochrome P450 ataF. AtaF probably acts as an epoxidase to promote a dual epoxidation formation at C8 and C9 along with C8' and C9', followed by the spontaneous nucleophilic attack of the amide nitrogens N10 and N10' to yield an intermediate with the pyrrolidine partial structure. The final steps of acetylaranotin biosynthesis involve the acetylation and ring rearrangement of an epitetrathiodiketopiperazine intermediate to produce acetylaranotin. AtaH probably catalyzes the acetylation of epitetrathiodiketopiperazine to produce a diacetate and ataY is responsible for the formation of the dihydrooxepin moiety that converts the diacetate intermediate to acetylaranotin via acetylapoaranotin. Both enzymes could function independently in the absence of the other. The acetylaranotin bis-thiomethyltransferase ataS located outside of acetylaranotin gene cluster is the main thiomethyltransferase responsible for converting acetylaranotin and its related intermediates to their methylated forms. The polypeptide is Trimodular acetylaranotin synthesis protein ataIMG (Aspergillus terreus (strain NIH 2624 / FGSC A1156)).